Reading from the N-terminus, the 349-residue chain is Isopentenyl-diphosphate delta-isomerase (349 aa).

6-7 provides a ligand contact to substrate; that stretch reads RK. FMN contacts are provided by residues 62-64, S93, and N122; that span reads AMT. Position 152 (Q152) interacts with substrate. E153 contributes to the Mg(2+) binding site. Residues K184, T214, 258 to 259, and 280 to 281 contribute to the FMN site; these read GG and AG.

The protein belongs to the IPP isomerase type 2 family. In terms of assembly, homooctamer. Dimer of tetramers. The cofactor is FMN. Requires NADPH as cofactor. It depends on Mg(2+) as a cofactor.

It localises to the cytoplasm. It catalyses the reaction isopentenyl diphosphate = dimethylallyl diphosphate. In terms of biological role, involved in the biosynthesis of isoprenoids. Catalyzes the 1,3-allylic rearrangement of the homoallylic substrate isopentenyl (IPP) to its allylic isomer, dimethylallyl diphosphate (DMAPP). The chain is Isopentenyl-diphosphate delta-isomerase from Bacillus mycoides (strain KBAB4) (Bacillus weihenstephanensis).